The primary structure comprises 453 residues: Bifunctional protein GlmU (453 aa).

The pyrophosphorylase stretch occupies residues 1 to 226 (MKFSAVILAA…AIEVEGVNDR (226 aa)). UDP-N-acetyl-alpha-D-glucosamine-binding positions include 8 to 11 (LAAG), lysine 22, glutamine 73, 78 to 79 (GT), 100 to 102 (YGD), glycine 137, glutamate 151, asparagine 166, and asparagine 224. Aspartate 102 lines the Mg(2+) pocket. Asparagine 224 contributes to the Mg(2+) binding site. The segment at 227 to 247 (AQLARLERAFQSMQAQKLLEQ) is linker. Residues 248–453 (GVMLRDPARF…TGWQRPVKQK (206 aa)) are N-acetyltransferase. Residues arginine 330 and lysine 348 each coordinate UDP-N-acetyl-alpha-D-glucosamine. Histidine 360 (proton acceptor) is an active-site residue. UDP-N-acetyl-alpha-D-glucosamine contacts are provided by tyrosine 363 and asparagine 374. Acetyl-CoA contacts are provided by residues alanine 377, 383–384 (NY), serine 402, alanine 420, and arginine 437.

In the N-terminal section; belongs to the N-acetylglucosamine-1-phosphate uridyltransferase family. The protein in the C-terminal section; belongs to the transferase hexapeptide repeat family. In terms of assembly, homotrimer. The cofactor is Mg(2+).

It is found in the cytoplasm. It carries out the reaction alpha-D-glucosamine 1-phosphate + acetyl-CoA = N-acetyl-alpha-D-glucosamine 1-phosphate + CoA + H(+). The catalysed reaction is N-acetyl-alpha-D-glucosamine 1-phosphate + UTP + H(+) = UDP-N-acetyl-alpha-D-glucosamine + diphosphate. Its pathway is nucleotide-sugar biosynthesis; UDP-N-acetyl-alpha-D-glucosamine biosynthesis; N-acetyl-alpha-D-glucosamine 1-phosphate from alpha-D-glucosamine 6-phosphate (route II): step 2/2. The protein operates within nucleotide-sugar biosynthesis; UDP-N-acetyl-alpha-D-glucosamine biosynthesis; UDP-N-acetyl-alpha-D-glucosamine from N-acetyl-alpha-D-glucosamine 1-phosphate: step 1/1. It functions in the pathway bacterial outer membrane biogenesis; LPS lipid A biosynthesis. Catalyzes the last two sequential reactions in the de novo biosynthetic pathway for UDP-N-acetylglucosamine (UDP-GlcNAc). The C-terminal domain catalyzes the transfer of acetyl group from acetyl coenzyme A to glucosamine-1-phosphate (GlcN-1-P) to produce N-acetylglucosamine-1-phosphate (GlcNAc-1-P), which is converted into UDP-GlcNAc by the transfer of uridine 5-monophosphate (from uridine 5-triphosphate), a reaction catalyzed by the N-terminal domain. This is Bifunctional protein GlmU from Vibrio campbellii (strain ATCC BAA-1116).